We begin with the raw amino-acid sequence, 484 residues long: Cobyric acid synthase (484 aa).

The GATase cobBQ-type domain maps to 251–438 (ALKIAVPVLP…LHGLFASDAY (188 aa)). The active-site Nucleophile is Cys333. Residue His430 is part of the active site.

Belongs to the CobB/CobQ family. CobQ subfamily.

The protein operates within cofactor biosynthesis; adenosylcobalamin biosynthesis. Functionally, catalyzes amidations at positions B, D, E, and G on adenosylcobyrinic A,C-diamide. NH(2) groups are provided by glutamine, and one molecule of ATP is hydrogenolyzed for each amidation. This Rhizobium etli (strain CIAT 652) protein is Cobyric acid synthase.